A 213-amino-acid chain; its full sequence is Glycerol-3-phosphate acyltransferase (213 aa).

A run of 5 helical transmembrane segments spans residues 3-23, 68-88, 112-132, 134-154, and 163-183; these read LLLF…LWIG, ILLP…GFFA, VLLG…VLVL, LFSM…LSVL, and LPNY…IIII.

This sequence belongs to the PlsY family. In terms of assembly, probably interacts with PlsX.

It localises to the cell membrane. It carries out the reaction an acyl phosphate + sn-glycerol 3-phosphate = a 1-acyl-sn-glycero-3-phosphate + phosphate. Its pathway is lipid metabolism; phospholipid metabolism. Functionally, catalyzes the transfer of an acyl group from acyl-phosphate (acyl-PO(4)) to glycerol-3-phosphate (G3P) to form lysophosphatidic acid (LPA). This enzyme utilizes acyl-phosphate as fatty acyl donor, but not acyl-CoA or acyl-ACP. The sequence is that of Glycerol-3-phosphate acyltransferase from Streptococcus pyogenes serotype M28 (strain MGAS6180).